The primary structure comprises 1342 residues: DNA-directed RNA polymerase subunit beta (1342 aa).

The protein belongs to the RNA polymerase beta chain family. In terms of assembly, the RNAP catalytic core consists of 2 alpha, 1 beta, 1 beta' and 1 omega subunit. When a sigma factor is associated with the core the holoenzyme is formed, which can initiate transcription.

The catalysed reaction is RNA(n) + a ribonucleoside 5'-triphosphate = RNA(n+1) + diphosphate. Its function is as follows. DNA-dependent RNA polymerase catalyzes the transcription of DNA into RNA using the four ribonucleoside triphosphates as substrates. The sequence is that of DNA-directed RNA polymerase subunit beta from Tolumonas auensis (strain DSM 9187 / NBRC 110442 / TA 4).